Reading from the N-terminus, the 550-residue chain is Retron Ec78 probable ATPase (550 aa).

An ATP-binding motif is present at residues 93–100 (GNNGKGKT).

Probable ATPase component of antiviral defense system retron Ec78, composed of a non-coding RNA (ncRNA), a reverse transcriptase (RT), this protein and a putative HNH endonuclease. Expression of retron Ec78 confers protection against bacteriophage T5. At multiplicity of infection (MOI) of 0.02 cultures slow growth when infected with T5 but do not collapse, at MOI 2 cultures enter growth stasis. This is Retron Ec78 probable ATPase from Escherichia coli.